A 199-amino-acid chain; its full sequence is DnaJ homolog subfamily C member 5B (199 aa).

Ser-14 and Ser-16 each carry phosphoserine. One can recognise a J domain in the interval 19 to 84 (ALYEILGLQK…SKRNIYDKYG (66 aa)).

As to quaternary structure, interacts with the chaperone complex consisting of HSC70 and SGTA. In terms of processing, palmitoylated.

The protein localises to the membrane. The sequence is that of DnaJ homolog subfamily C member 5B (DNAJC5B) from Ailuropoda melanoleuca (Giant panda).